The primary structure comprises 215 residues: 23.2 kDa heat shock protein (215 aa).

Positions 1 to 27 (MASMRTAAAAAMLACIAVVLASTAADG) are cleaved as a signal peptide. The sHSP domain occupies 69–189 (DVAMLSMARV…GPRVVGIASA (121 aa)). Positions 183–215 (VVGIASAGGDDGGKKSIGGAGEGQNQQAKKVEL) are disordered. Residues 205 to 215 (GQNQQAKKVEL) show a composition bias toward polar residues.

Belongs to the small heat shock protein (HSP20) family. May form oligomeric structures.

Its subcellular location is the endoplasmic reticulum. The chain is 23.2 kDa heat shock protein (HSP23.2) from Oryza sativa subsp. japonica (Rice).